The chain runs to 175 residues: Large ribosomal subunit protein uL10 (175 aa).

Belongs to the universal ribosomal protein uL10 family. In terms of assembly, part of the ribosomal stalk of the 50S ribosomal subunit. The N-terminus interacts with L11 and the large rRNA to form the base of the stalk. The C-terminus forms an elongated spine to which L12 dimers bind in a sequential fashion forming a multimeric L10(L12)X complex.

In terms of biological role, forms part of the ribosomal stalk, playing a central role in the interaction of the ribosome with GTP-bound translation factors. The protein is Large ribosomal subunit protein uL10 of Methylobacterium nodulans (strain LMG 21967 / CNCM I-2342 / ORS 2060).